Consider the following 237-residue polypeptide: Protein YIPF4 (237 aa).

Over M1–P106 the chain is Cytoplasmic. Residues D107–F127 form a helical membrane-spanning segment. The Lumenal portion of the chain corresponds to R128–S131. A helical transmembrane segment spans residues W132–G152. Residues G153–V160 are Cytoplasmic-facing. A helical transmembrane segment spans residues L161–I181. The Lumenal portion of the chain corresponds to G182–S188. Residues T189–G209 traverse the membrane as a helical segment. Over D210–K216 the chain is Cytoplasmic. Residues P217–V237 form a helical membrane-spanning segment.

The protein belongs to the YIP1 family.

Its subcellular location is the golgi apparatus. It is found in the cis-Golgi network membrane. Its function is as follows. Involved in the maintenance of the Golgi structure. The protein is Protein YIPF4 (yipf4) of Danio rerio (Zebrafish).